Here is a 77-residue protein sequence, read N- to C-terminus: Exodeoxyribonuclease 7 small subunit (77 aa).

The protein belongs to the XseB family. In terms of assembly, heterooligomer composed of large and small subunits.

It localises to the cytoplasm. The enzyme catalyses Exonucleolytic cleavage in either 5'- to 3'- or 3'- to 5'-direction to yield nucleoside 5'-phosphates.. Its function is as follows. Bidirectionally degrades single-stranded DNA into large acid-insoluble oligonucleotides, which are then degraded further into small acid-soluble oligonucleotides. This chain is Exodeoxyribonuclease 7 small subunit, found in Trichlorobacter lovleyi (strain ATCC BAA-1151 / DSM 17278 / SZ) (Geobacter lovleyi).